Consider the following 361-residue polypeptide: Chitin synthase export chaperone (361 aa).

Transmembrane regions (helical) follow at residues 48 to 68 (IIFQ…ATIM), 86 to 106 (LFFY…SAII), 119 to 139 (IYAG…FVGF), 150 to 170 (LWFL…IPVA), 184 to 204 (TVGL…IYFI), 218 to 238 (WVIG…LLLV), and 250 to 270 (HYVD…MMVY).

The protein belongs to the CHS7 family. In terms of assembly, interacts with CHS3.

Its subcellular location is the endoplasmic reticulum membrane. Chaperone required for the export of the chitin synthase CHS3 from the endoplasmic reticulum. This is Chitin synthase export chaperone (CHS7) from Cryptococcus neoformans var. neoformans serotype D (strain JEC21 / ATCC MYA-565) (Filobasidiella neoformans).